A 757-amino-acid chain; its full sequence is 5-methyltetrahydropteroyltriglutamate--homocysteine methyltransferase (757 aa).

5-methyltetrahydropteroyltri-L-glutamate is bound by residues 15 to 18 (RELK) and K114. Residues 428–430 (IGS) and E481 contribute to the L-homocysteine site. L-methionine is bound by residues 428–430 (IGS) and E481. 5-methyltetrahydropteroyltri-L-glutamate is bound by residues 512 to 513 (RC) and W558. L-homocysteine is bound at residue D596. An L-methionine-binding site is contributed by D596. E602 is a binding site for 5-methyltetrahydropteroyltri-L-glutamate. Residues H639, C641, and E663 each contribute to the Zn(2+) site. The active-site Proton donor is H692. C724 serves as a coordination point for Zn(2+).

It belongs to the vitamin-B12 independent methionine synthase family. The cofactor is Zn(2+).

The enzyme catalyses 5-methyltetrahydropteroyltri-L-glutamate + L-homocysteine = tetrahydropteroyltri-L-glutamate + L-methionine. The protein operates within amino-acid biosynthesis; L-methionine biosynthesis via de novo pathway; L-methionine from L-homocysteine (MetE route): step 1/1. In terms of biological role, catalyzes the transfer of a methyl group from 5-methyltetrahydrofolate to homocysteine resulting in methionine formation. In Lactococcus lactis subsp. cremoris (strain SK11), this protein is 5-methyltetrahydropteroyltriglutamate--homocysteine methyltransferase.